Here is a 278-residue protein sequence, read N- to C-terminus: Digeranylgeranylglyceryl phosphate synthase (278 aa).

A run of 7 helical transmembrane segments spans residues 12–32 (LKNC…ASYF), 34–54 (ISMI…CGFG), 91–111 (LLVV…LMAV), 142–162 (VFIF…LFLC), 204–224 (FLLV…FFGI), 226–246 (YLIS…NLVM), and 257–277 (SRNI…GSLF).

The protein belongs to the UbiA prenyltransferase family. DGGGP synthase subfamily. It depends on Mg(2+) as a cofactor.

It is found in the cell membrane. It carries out the reaction sn-3-O-(geranylgeranyl)glycerol 1-phosphate + (2E,6E,10E)-geranylgeranyl diphosphate = 2,3-bis-O-(geranylgeranyl)-sn-glycerol 1-phosphate + diphosphate. The protein operates within membrane lipid metabolism; glycerophospholipid metabolism. In terms of biological role, prenyltransferase that catalyzes the transfer of the geranylgeranyl moiety of geranylgeranyl diphosphate (GGPP) to the C2 hydroxyl of (S)-3-O-geranylgeranylglyceryl phosphate (GGGP). This reaction is the second ether-bond-formation step in the biosynthesis of archaeal membrane lipids. This chain is Digeranylgeranylglyceryl phosphate synthase, found in Methanococcus maripaludis (strain C6 / ATCC BAA-1332).